The primary structure comprises 951 residues: Valine--tRNA ligase (951 aa).

Positions 42–52 (PNVTGSLHMGH) match the 'HIGH' region motif. A 'KMSKS' region motif is present at residues 554–558 (KMSKS). Lys-557 contacts ATP. The stretch at 880–914 (AGLIDKAAELDRLAKEVAKLEAEIGRIESKLSNEG) forms a coiled coil.

The protein belongs to the class-I aminoacyl-tRNA synthetase family. ValS type 1 subfamily. In terms of assembly, monomer.

The protein resides in the cytoplasm. It carries out the reaction tRNA(Val) + L-valine + ATP = L-valyl-tRNA(Val) + AMP + diphosphate. Functionally, catalyzes the attachment of valine to tRNA(Val). As ValRS can inadvertently accommodate and process structurally similar amino acids such as threonine, to avoid such errors, it has a 'posttransfer' editing activity that hydrolyzes mischarged Thr-tRNA(Val) in a tRNA-dependent manner. The polypeptide is Valine--tRNA ligase (Pectobacterium atrosepticum (strain SCRI 1043 / ATCC BAA-672) (Erwinia carotovora subsp. atroseptica)).